Here is a 202-residue protein sequence, read N- to C-terminus: Nucleoside triphosphate pyrophosphatase (202 aa).

Asp-79 functions as the Proton acceptor in the catalytic mechanism.

The protein belongs to the Maf family. It depends on a divalent metal cation as a cofactor.

Its subcellular location is the cytoplasm. It carries out the reaction a ribonucleoside 5'-triphosphate + H2O = a ribonucleoside 5'-phosphate + diphosphate + H(+). The enzyme catalyses a 2'-deoxyribonucleoside 5'-triphosphate + H2O = a 2'-deoxyribonucleoside 5'-phosphate + diphosphate + H(+). Nucleoside triphosphate pyrophosphatase. May have a dual role in cell division arrest and in preventing the incorporation of modified nucleotides into cellular nucleic acids. The protein is Nucleoside triphosphate pyrophosphatase of Bradyrhizobium diazoefficiens (strain JCM 10833 / BCRC 13528 / IAM 13628 / NBRC 14792 / USDA 110).